Reading from the N-terminus, the 254-residue chain is HLA class II histocompatibility antigen, DQ alpha 1 chain (254 aa).

Residues 1–23 (MILNKALMLGALALTTVMSPCGG) form the signal peptide. Positions 24-119 (EDIVADHVAS…EVPEVTVFSK (96 aa)) are alpha-1. Over 24–216 (EDIVADHVAS…IPAPMSELTE (193 aa)) the chain is Extracellular. Asn103 and Asn143 each carry an N-linked (GlcNAc...) asparagine glycan. An Ig-like C1-type domain is found at 112 to 204 (PEVTVFSKSP…LDKPLLKHWE (93 aa)). The interval 120 to 203 (SPVTLGQPNI…GLDKPLLKHW (84 aa)) is alpha-2. Cysteines 132 and 188 form a disulfide. Residues 204-216 (EPEIPAPMSELTE) are connecting peptide. Residues 217–239 (TVVCALGLSVGLVGIVVGTVFII) form a helical membrane-spanning segment. Residues 240–254 (RGLRSVGASRHQGPL) are Cytoplasmic-facing.

Belongs to the MHC class II family. Heterodimer of an alpha and a beta subunit; also referred as MHC class II molecule. In the endoplasmic reticulum (ER) it forms a heterononamer; 3 MHC class II molecules bind to a CD74 homotrimer (also known as invariant chain or HLA class II histocompatibility antigen gamma chain). In the endosomal/lysosomal system; CD74 undergoes sequential degradation by various proteases; leaving a small fragment termed CLIP on each MHC class II molecule. MHC class II molecule interacts with HLA_DM, and HLA_DO in B-cells, in order to release CLIP and facilitate the binding of antigenic peptides.

It is found in the cell membrane. Its subcellular location is the endoplasmic reticulum membrane. The protein resides in the golgi apparatus. The protein localises to the trans-Golgi network membrane. It localises to the endosome membrane. It is found in the lysosome membrane. Functionally, binds peptides derived from antigens that access the endocytic route of antigen presenting cells (APC) and presents them on the cell surface for recognition by the CD4 T-cells. The peptide binding cleft accommodates peptides of 10-30 residues. The peptides presented by MHC class II molecules are generated mostly by degradation of proteins that access the endocytic route, where they are processed by lysosomal proteases and other hydrolases. Exogenous antigens that have been endocytosed by the APC are thus readily available for presentation via MHC II molecules, and for this reason this antigen presentation pathway is usually referred to as exogenous. As membrane proteins on their way to degradation in lysosomes as part of their normal turn-over are also contained in the endosomal/lysosomal compartments, exogenous antigens must compete with those derived from endogenous components. Autophagy is also a source of endogenous peptides, autophagosomes constitutively fuse with MHC class II loading compartments. In addition to APCs, other cells of the gastrointestinal tract, such as epithelial cells, express MHC class II molecules and CD74 and act as APCs, which is an unusual trait of the GI tract. To produce a MHC class II molecule that presents an antigen, three MHC class II molecules (heterodimers of an alpha and a beta chain) associate with a CD74 trimer in the ER to form a heterononamer. Soon after the entry of this complex into the endosomal/lysosomal system where antigen processing occurs, CD74 undergoes a sequential degradation by various proteases, including CTSS and CTSL, leaving a small fragment termed CLIP (class-II-associated invariant chain peptide). The removal of CLIP is facilitated by HLA-DM via direct binding to the alpha-beta-CLIP complex so that CLIP is released. HLA-DM stabilizes MHC class II molecules until primary high affinity antigenic peptides are bound. The MHC II molecule bound to a peptide is then transported to the cell membrane surface. In B-cells, the interaction between HLA-DM and MHC class II molecules is regulated by HLA-DO. Primary dendritic cells (DCs) also to express HLA-DO. Lysosomal microenvironment has been implicated in the regulation of antigen loading into MHC II molecules, increased acidification produces increased proteolysis and efficient peptide loading. The protein is HLA class II histocompatibility antigen, DQ alpha 1 chain (HLA-DQA1) of Homo sapiens (Human).